A 206-amino-acid chain; its full sequence is Glycerol-3-phosphate acyltransferase (206 aa).

Transmembrane regions (helical) follow at residues 3–23 (LSLI…VIIG), 47–67 (VLGP…GTLA), 79–99 (HSLV…SIFL), 119–139 (PLFF…TSMV), and 152–172 (ILSF…VLIF).

It belongs to the PlsY family. In terms of assembly, probably interacts with PlsX.

It is found in the cell membrane. It carries out the reaction an acyl phosphate + sn-glycerol 3-phosphate = a 1-acyl-sn-glycero-3-phosphate + phosphate. The protein operates within lipid metabolism; phospholipid metabolism. Catalyzes the transfer of an acyl group from acyl-phosphate (acyl-PO(4)) to glycerol-3-phosphate (G3P) to form lysophosphatidic acid (LPA). This enzyme utilizes acyl-phosphate as fatty acyl donor, but not acyl-CoA or acyl-ACP. The sequence is that of Glycerol-3-phosphate acyltransferase from Latilactobacillus sakei subsp. sakei (strain 23K) (Lactobacillus sakei subsp. sakei).